Reading from the N-terminus, the 538-residue chain is Retinoblastoma-binding protein 5 (538 aa).

WD repeat units lie at residues 22 to 63 and 64 to 103; these read DCIS…KIIS and AHIHPVCSLCWSRDGHKLVSASTDNIVSQWDVLSGDCDQR. Lys-129 participates in a covalent cross-link: Glycyl lysine isopeptide (Lys-Gly) (interchain with G-Cter in SUMO2). WD repeat units follow at residues 148-188, 196-235, 249-291, and 293-331; these read DDDS…LVAS, SNTTAIKSIEFARKGSCFLINTADRIIRVYDGREILTCGR, VNRT…KILH, and TRGELLLDVAWHPVRPIIASISSGVVSIWAQNQVENWSA. Residue Thr-252 is modified to Phosphothreonine; by CDK1. The interaction with ASH2L stretch occupies residues 330-366; that stretch reads SAFAPDFKELDENVEYEERESEFDIEDEDKSEPEQTG. Over residues 344-360 the composition is skewed to acidic residues; the sequence is EYEERESEFDIEDEDKS. Residues 344-377 form a disordered region; that stretch reads EYEERESEFDIEDEDKSEPEQTGADAAEDEEVDV. Position 350 is a phosphoserine (Ser-350). Residues 371–380 form an interaction with WDR5 region; sequence EDEEVDVTSV. 2 positions are modified to phosphoserine: Ser-388 and Ser-389. Residues 408–519 are disordered; that stretch reads VEDPEENPYG…LPLEGSTKGK (112 aa). Residues 479 to 490 show a composition bias toward basic residues; that stretch reads SKKKQAGRPKGS. Basic and acidic residues predominate over residues 491 to 510; sequence KGKEKDSPFKPKLYKGDRGL. A Phosphoserine; by CDK1 modification is found at Ser-497. Position 525 is a phosphoserine (Ser-525).

In terms of assembly, component of the SET1 complex, at least composed of the catalytic subunit (SETD1A or SETD1B), WDR5, WDR82, RBBP5, ASH2L/ASH2, CXXC1/CFP1, HCFC1 and DPY30. Core component of several methyltransferase-containing complexes including MLL1/MLL, MLL2/3 (also named ASCOM complex) and MLL4/WBP7. Each complex is at least composed of ASH2L, RBBP5, WDR5, DPY30, one or more specific histone methyltransferases (KMT2A/MLL1, KMT2D/MLL2, KMT2C/MLL3 and KMT2B/MLL4), and the facultative components PAGR1, BACC1, CHD8, E2F6, HCFC1, HCFC2, HSP70, INO80C, KDM6A, KANSL1, LAS1L, MAX, MCRS1, MEN1, MGA, MYST1/MOF, NCOA6, PAXIP1/PTIP, PELP1, PHF20, PRP31, RING2, RUVB1/TIP49A, RUVB2/TIP49B, SENP3, TAF1, TAF4, TAF6, TAF7, TAF9, TEX10 and alpha- and beta-tubulin. Component of a histone methylation complex composed of at least ZNF335, RBBP5, ASH2L and WDR5; the complex may have histone H3-specific methyltransferase activity, however does not have specificity for 'Lys-4' of histone H3. Interacts with ZNF335. Interacts with ASH2L; the interaction is direct. Interacts with WDR5; the interaction is direct. Components of the ZNF335-RBBP5-ASH2L-WDR5 histone methylation complex may associate with components of a nuclear receptor-mediated transcription complex to form a complex at least composed of ZNF335, HCFC1, CCAR2, EMSY, MKI67, RBBP5, ASH2L and WDR5. Within this complex interacts with EMSY. Found in a complex with RBBP5, ASH2L, DPY30, KMT2A, KMT2D and WDR5. Interacts with SETD1A. Interacts with WDR82.

It is found in the nucleus. In terms of biological role, in embryonic stem (ES) cells, plays a crucial role in the differentiation potential, particularly along the neural lineage, regulating gene induction and H3 'Lys-4' methylation at key developmental loci, including that mediated by retinoic acid. Does not affect ES cell self-renewal. Component or associated component of some histone methyltransferase complexes which regulates transcription through recruitment of those complexes to gene promoters. As part of the MLL1/MLL complex, involved in mono-, di- and trimethylation at 'Lys-4' of histone H3. Histone H3 'Lys-4' methylation represents a specific tag for epigenetic transcriptional activation. In association with ASH2L and WDR5, stimulates the histone methyltransferase activities of KMT2A, KMT2B, KMT2C, KMT2D, SETD1A and SETD1B. The sequence is that of Retinoblastoma-binding protein 5 (Rbbp5) from Mus musculus (Mouse).